The chain runs to 331 residues: Small ribosomal subunit protein uS2 (331 aa).

Belongs to the universal ribosomal protein uS2 family.

The polypeptide is Small ribosomal subunit protein uS2 (Rhodopseudomonas palustris (strain ATCC BAA-98 / CGA009)).